The primary structure comprises 131 residues: Cilia- and flagella-associated protein 144 (131 aa).

Residues 79-99 (TKKYSEPQTESQEIGWNTTPL) are disordered. The segment covering 84–99 (EPQTESQEIGWNTTPL) has biased composition (polar residues).

This sequence belongs to the CFAP144 family. As to expression, expressed in choroid plexus (at protein level). Expressed by motile ciliated cells in choroid plexus.

The protein resides in the cytoplasm. The protein localises to the cytoskeleton. It localises to the cilium axoneme. Its subcellular location is the flagellum axoneme. Its function is as follows. Microtubule inner protein (MIP) part of the dynein-decorated doublet microtubules (DMTs) in cilia axoneme, which is required for motile cilia beating. This is Cilia- and flagella-associated protein 144 (CFAP144) from Gallus gallus (Chicken).